The chain runs to 432 residues: MSIEVDWRAATSGPDGEALAERIRSFIHDKFQQVALPRFIRSVQVHSFDFGTIPPDLEVKDICEPFADFYEEDEDDETSDVSEELVSGHGTQWHRDLNEPPFHEEMAMNRPLRDPFDEAFHSSTLRSPMEHLNPHFLPRAGTPGIPGGTSTLGYHLMSLGGLSGTQTPLAAVAGGTPFANGWTDPGMGASSRGHPSISGPTAVHPSRMEADIDTSNPTSRPSTSSTLPSHPSASNQPSGDATTGKEHGSLAEDEHLDDPMTSGHPLRLPPRMRERRPEDFQVLCHAKYAGDVRLSLTAEILLDYPMPSFVGLPLKLNVTGITFDGVAVIAYIRKRVHFCFLSAEDADALIGSDQQEARGQDDRPWSSADPTASPKRQGGLLREIRVESEIGRKEDGKQVLKNVGKVERFVLAQVRRIFEEEMVFPSFWTFLI.

Residues methionine 1–isoleucine 432 enclose the SMP-LTD domain. Disordered stretches follow at residues tryptophan 182–arginine 273 and glutamine 354–glutamine 377. Residues threonine 214 to serine 234 show a composition bias toward low complexity. Composition is skewed to basic and acidic residues over residues threonine 243–aspartate 253 and glutamine 355–proline 364.

The protein belongs to the MDM12 family. As to quaternary structure, component of the ER-mitochondria encounter structure (ERMES) or MDM complex, composed of mmm1, mdm10, mdm12 and mdm34. A mmm1 homodimer associates with one molecule of mdm12 on each side in a pairwise head-to-tail manner, and the SMP-LTD domains of mmm1 and mdm12 generate a continuous hydrophobic tunnel for phospholipid trafficking.

The protein localises to the mitochondrion outer membrane. It is found in the endoplasmic reticulum membrane. In terms of biological role, component of the ERMES/MDM complex, which serves as a molecular tether to connect the endoplasmic reticulum (ER) and mitochondria. Components of this complex are involved in the control of mitochondrial shape and protein biogenesis, and function in nonvesicular lipid trafficking between the ER and mitochondria. Mdm12 is required for the interaction of the ER-resident membrane protein MMM1 and the outer mitochondrial membrane-resident beta-barrel protein mdm10. The mdm12-mmm1 subcomplex functions in the major beta-barrel assembly pathway that is responsible for biogenesis of all mitochondrial outer membrane beta-barrel proteins, and acts in a late step after the SAM complex. The mdm10-mdm12-mmm1 subcomplex further acts in the TOM40-specific pathway after the action of the mdm12-mmm1 complex. Essential for establishing and maintaining the structure of mitochondria and maintenance of mtDNA nucleoids. This is Mitochondrial distribution and morphology protein 12 from Aspergillus flavus (strain ATCC 200026 / FGSC A1120 / IAM 13836 / NRRL 3357 / JCM 12722 / SRRC 167).